We begin with the raw amino-acid sequence, 117 residues long: Small ribosomal subunit protein bS18c (117 aa).

Residues 86–117 are disordered; that stretch reads SELTPRTNALKARNKNKQNKYQNNQTKFLSNF.

This sequence belongs to the bacterial ribosomal protein bS18 family. Part of the 30S ribosomal subunit.

It localises to the plastid. In Cuscuta exaltata (Tall dodder), this protein is Small ribosomal subunit protein bS18c.